We begin with the raw amino-acid sequence, 297 residues long: uncharacterized protein (297 aa).

Positions 175–199 (VLPTNRNNPVRSNVDIKPVNPPSSK) are disordered. Residues 176-185 (LPTNRNNPVR) show a composition bias toward polar residues. N269 carries an N-linked (GlcNAc...) asparagine; by host glycan. A helical transmembrane segment spans residues 277 to 297 (LFGSPVLLICVASLLLLIIIL).

Belongs to the ascovirus HvAV ORF18 family.

It localises to the membrane. This is an uncharacterized protein from Noctuidae (owlet moths).